The chain runs to 384 residues: S-adenosylmethionine synthase (384 aa).

Position 15 (H15) interacts with ATP. D17 lines the Mg(2+) pocket. K(+) is bound at residue E43. L-methionine-binding residues include E56 and Q99. A flexible loop region spans residues 99–109; the sequence is QSPDINQGVDR. Residues 164 to 166, 231 to 232, D240, 246 to 247, A263, and K267 contribute to the ATP site; these read DAK, RF, and RK. D240 provides a ligand contact to L-methionine. K271 contacts L-methionine.

Belongs to the AdoMet synthase family. Homotetramer; dimer of dimers. It depends on Mg(2+) as a cofactor. K(+) is required as a cofactor.

It localises to the cytoplasm. The enzyme catalyses L-methionine + ATP + H2O = S-adenosyl-L-methionine + phosphate + diphosphate. The protein operates within amino-acid biosynthesis; S-adenosyl-L-methionine biosynthesis; S-adenosyl-L-methionine from L-methionine: step 1/1. In terms of biological role, catalyzes the formation of S-adenosylmethionine (AdoMet) from methionine and ATP. The overall synthetic reaction is composed of two sequential steps, AdoMet formation and the subsequent tripolyphosphate hydrolysis which occurs prior to release of AdoMet from the enzyme. This is S-adenosylmethionine synthase from Shewanella piezotolerans (strain WP3 / JCM 13877).